The sequence spans 338 residues: Lipoate-protein ligase A (338 aa).

The BPL/LPL catalytic domain maps to 29-216 (PATQRVLFLW…AFFVHYGERV (188 aa)). ATP contacts are provided by residues Arg71, 76–79 (GAVF), and Lys134. (R)-lipoate is bound at residue Lys134.

This sequence belongs to the LplA family. In terms of assembly, monomer.

It localises to the cytoplasm. It carries out the reaction L-lysyl-[lipoyl-carrier protein] + (R)-lipoate + ATP = N(6)-[(R)-lipoyl]-L-lysyl-[lipoyl-carrier protein] + AMP + diphosphate + H(+). The protein operates within protein modification; protein lipoylation via exogenous pathway; protein N(6)-(lipoyl)lysine from lipoate: step 1/2. It participates in protein modification; protein lipoylation via exogenous pathway; protein N(6)-(lipoyl)lysine from lipoate: step 2/2. In terms of biological role, catalyzes both the ATP-dependent activation of exogenously supplied lipoate to lipoyl-AMP and the transfer of the activated lipoyl onto the lipoyl domains of lipoate-dependent enzymes. The chain is Lipoate-protein ligase A from Salmonella newport (strain SL254).